A 506-amino-acid polypeptide reads, in one-letter code: Maturase K (506 aa).

This sequence belongs to the intron maturase 2 family. MatK subfamily.

It localises to the plastid. Its subcellular location is the chloroplast. Usually encoded in the trnK tRNA gene intron. Probably assists in splicing its own and other chloroplast group II introns. The polypeptide is Maturase K (Angiopteris evecta (Mule's foot fern)).